The chain runs to 169 residues: Disulfide bond formation protein B (169 aa).

The Cytoplasmic segment spans residues 1–13 (MQSLISFAHSRLS). A helical membrane pass occupies residues 14-30 (WGILALSALALESAALY). Topologically, residues 31–48 (FQHIMKLDPCVMCIYQRV) are periplasmic. The cysteines at positions 40 and 43 are disulfide-linked. A helical transmembrane segment spans residues 49–64 (AVFGLLGAGLFGFMAP). The Cytoplasmic segment spans residues 65–71 (ANRVIRA). A helical transmembrane segment spans residues 72–89 (LGALLWGISAAWGLKLAL). The Periplasmic portion of the chain corresponds to 90–144 (ELVDMQNNPNPFSTCSFLPEFPSWLQLHEWLPSVFMPTGMCTDIPWEFAGVTMGE). Cysteines 104 and 130 form a disulfide. The chain crosses the membrane as a helical span at residues 145–163 (WMIVAFSVYLLAWLAFIVP). At 164–169 (MLKKSA) the chain is on the cytoplasmic side.

This sequence belongs to the DsbB family.

The protein localises to the cell inner membrane. Its function is as follows. Required for disulfide bond formation in some periplasmic proteins. Acts by oxidizing the DsbA protein. This chain is Disulfide bond formation protein B, found in Shewanella amazonensis (strain ATCC BAA-1098 / SB2B).